The following is a 322-amino-acid chain: 4-hydroxythreonine-4-phosphate dehydrogenase (322 aa).

Thr132 serves as a coordination point for substrate. A divalent metal cation is bound by residues His160, His205, and His260. Substrate contacts are provided by Lys268, Asn277, and Arg286.

It belongs to the PdxA family. As to quaternary structure, homodimer. The cofactor is Zn(2+). It depends on Mg(2+) as a cofactor. Requires Co(2+) as cofactor.

The protein localises to the cytoplasm. It catalyses the reaction 4-(phosphooxy)-L-threonine + NAD(+) = 3-amino-2-oxopropyl phosphate + CO2 + NADH. It participates in cofactor biosynthesis; pyridoxine 5'-phosphate biosynthesis; pyridoxine 5'-phosphate from D-erythrose 4-phosphate: step 4/5. In terms of biological role, catalyzes the NAD(P)-dependent oxidation of 4-(phosphooxy)-L-threonine (HTP) into 2-amino-3-oxo-4-(phosphooxy)butyric acid which spontaneously decarboxylates to form 3-amino-2-oxopropyl phosphate (AHAP). The sequence is that of 4-hydroxythreonine-4-phosphate dehydrogenase from Xanthomonas campestris pv. campestris (strain B100).